A 336-amino-acid polypeptide reads, in one-letter code: Probable allantoicase (336 aa).

This sequence belongs to the allantoicase family.

It catalyses the reaction allantoate + H2O = (S)-ureidoglycolate + urea. It functions in the pathway nitrogen metabolism; (S)-allantoin degradation; (S)-ureidoglycolate from allantoate (aminidohydrolase route): step 1/1. In Ralstonia nicotianae (strain ATCC BAA-1114 / GMI1000) (Ralstonia solanacearum), this protein is Probable allantoicase.